A 424-amino-acid chain; its full sequence is UPF0229 protein ECA2349 (424 aa).

A disordered region spans residues 53–111 (SIPNADINEPMFHQGRGGHRHRVHPGNDHFVQNDKIERPQGGGGSGSGQGDASKDGEGD). Positions 77-90 (PGNDHFVQNDKIER) are enriched in basic and acidic residues. A compositionally biased stretch (gly residues) spans 92–101 (QGGGGSGSGQ).

This sequence belongs to the UPF0229 family.

The protein is UPF0229 protein ECA2349 of Pectobacterium atrosepticum (strain SCRI 1043 / ATCC BAA-672) (Erwinia carotovora subsp. atroseptica).